Reading from the N-terminus, the 116-residue chain is Venom nerve growth factor (116 aa).

3 cysteine pairs are disulfide-bonded: cysteine 14/cysteine 78, cysteine 56/cysteine 106, and cysteine 66/cysteine 108.

It belongs to the NGF-beta family. As to quaternary structure, homodimer; non-covalently linked. Post-translationally, not glycosylated. Expressed by the venom gland.

Its subcellular location is the secreted. Its function is as follows. Nerve growth factor is important for the development and maintenance of the sympathetic and sensory nervous systems. It stimulates division and differentiation of sympathetic and embryonic sensory neurons as well as basal forebrain cholinergic neurons in the brain. Its relevance in the snake venom is not clear. However, it has been shown to inhibit metalloproteinase-dependent proteolysis of platelet glycoprotein Ib alpha, suggesting a metalloproteinase inhibition to prevent metalloprotease autodigestion and/or protection against prey proteases. Binds a lipid between the two protein chains in the homodimer. The lipid-bound form promotes histamine relase from mouse mast cells, contrary to the lipid-free form. The sequence is that of Venom nerve growth factor from Naja naja (Indian cobra).